We begin with the raw amino-acid sequence, 375 residues long: Response regulator aspartate phosphatase E (375 aa).

A coiled-coil region spans residues 24–95; sequence NVTDAEMLKA…HKKKLDNMRA (72 aa). 6 TPR repeats span residues 96 to 129, 177 to 210, 219 to 252, 258 to 291, 297 to 330, and 333 to 366; these read YYYN…IPTI, IQCH…AELL, ATAF…YRKI, PQAY…AVDF, MNLF…KGYP, and EELA…QKQI.

Belongs to the Rap family.

It is found in the cytoplasm. Its activity is regulated as follows. Phosphatase activity is inhibited by the phosphatase regulator PhrE. Its function is as follows. Involved in the regulation of sporulation. Acts as a phosphatase that specifically dephosphorylates the sporulation initiation phosphotransferase Spo0F and inhibits its activity. Probably plays a dispensable role in the overall context of sporulation initiation. In Bacillus subtilis (strain 168), this protein is Response regulator aspartate phosphatase E (rapE).